The primary structure comprises 103 residues: Phosphoribosyl-ATP pyrophosphatase (103 aa).

The protein belongs to the PRA-PH family.

It localises to the cytoplasm. The enzyme catalyses 1-(5-phospho-beta-D-ribosyl)-ATP + H2O = 1-(5-phospho-beta-D-ribosyl)-5'-AMP + diphosphate + H(+). It functions in the pathway amino-acid biosynthesis; L-histidine biosynthesis; L-histidine from 5-phospho-alpha-D-ribose 1-diphosphate: step 2/9. This chain is Phosphoribosyl-ATP pyrophosphatase, found in Cereibacter sphaeroides (strain ATCC 17025 / ATH 2.4.3) (Rhodobacter sphaeroides).